The chain runs to 74 residues: Protein krueppel (74 aa).

C2H2-type zinc fingers lie at residues E1–H4, F10–H32, Y38–H60, and Y66–K74.

It belongs to the krueppel C2H2-type zinc-finger protein family.

The protein resides in the nucleus. Functionally, krueppel is a gap class segmentation protein. The polypeptide is Protein krueppel (Kr) (Bradysia coprophila (Dark-winged fungus gnat)).